The primary structure comprises 328 residues: Lipoyl synthase (328 aa).

[4Fe-4S] cluster contacts are provided by C56, C61, C67, C82, C86, C89, and S298. A Radical SAM core domain is found at 68 to 287 (WEDREATFLI…KEEAEEIGFS (220 aa)).

Belongs to the radical SAM superfamily. Lipoyl synthase family. It depends on [4Fe-4S] cluster as a cofactor.

The protein resides in the cytoplasm. It catalyses the reaction [[Fe-S] cluster scaffold protein carrying a second [4Fe-4S](2+) cluster] + N(6)-octanoyl-L-lysyl-[protein] + 2 oxidized [2Fe-2S]-[ferredoxin] + 2 S-adenosyl-L-methionine + 4 H(+) = [[Fe-S] cluster scaffold protein] + N(6)-[(R)-dihydrolipoyl]-L-lysyl-[protein] + 4 Fe(3+) + 2 hydrogen sulfide + 2 5'-deoxyadenosine + 2 L-methionine + 2 reduced [2Fe-2S]-[ferredoxin]. It participates in protein modification; protein lipoylation via endogenous pathway; protein N(6)-(lipoyl)lysine from octanoyl-[acyl-carrier-protein]: step 2/2. Its function is as follows. Catalyzes the radical-mediated insertion of two sulfur atoms into the C-6 and C-8 positions of the octanoyl moiety bound to the lipoyl domains of lipoate-dependent enzymes, thereby converting the octanoylated domains into lipoylated derivatives. The polypeptide is Lipoyl synthase (Streptomyces avermitilis (strain ATCC 31267 / DSM 46492 / JCM 5070 / NBRC 14893 / NCIMB 12804 / NRRL 8165 / MA-4680)).